Reading from the N-terminus, the 125-residue chain is Basic leucine zipper transcriptional factor ATF-like (125 aa).

Over residues 1 to 14 the composition is skewed to low complexity; that stretch reads MPHSSDSSDSSFSR. Residues 1–58 are disordered; that stretch reads MPHSSDSSDSSFSRSPPPGKQDSSDDVRKVQRREKNRIAAQKSRQRQTQKADTLHLES. Residues 26 to 89 enclose the bZIP domain; the sequence is DVRKVQRREK…KYFTSVLSSH (64 aa). The basic motif stretch occupies residues 28–50; the sequence is RKVQRREKNRIAAQKSRQRQTQK. At S43 the chain carries Phosphoserine. The residue at position 48 (T48) is a Phosphothreonine. The leucine-zipper stretch occupies residues 54–75; sequence LHLESEDLEKQNAALRKEIKQL.

It belongs to the bZIP family. Heterodimer; mainly heterodimerizes with JUNB. The BATF-JUNB heterodimer interacts with IRF4 and IRF8. Interacts (via bZIP domain) with IRF4 and IRF8; the interaction is direct. Also forms heterodimers with JUN and JUND. Interacts with IFI35. In terms of processing, phosphorylated on serine and threonine residues and at least one tyrosine residue. Phosphorylation at Ser-43 inhibit DNA binding activity and transforms it as a negative regulator of AP-1 mediated transcription.

The protein localises to the nucleus. It localises to the cytoplasm. Functionally, AP-1 family transcription factor that controls the differentiation of lineage-specific cells in the immune system: specifically mediates the differentiation of T-helper 17 cells (Th17), follicular T-helper cells (TfH), CD8(+) dendritic cells and class-switch recombination (CSR) in B-cells. Acts via the formation of a heterodimer with JUNB that recognizes and binds DNA sequence 5'-TGA[CG]TCA-3'. The BATF-JUNB heterodimer also forms a complex with IRF4 (or IRF8) in immune cells, leading to recognition of AICE sequence (5'-TGAnTCA/GAAA-3'), an immune-specific regulatory element, followed by cooperative binding of BATF and IRF4 (or IRF8) and activation of genes. Controls differentiation of T-helper cells producing interleukin-17 (Th17 cells) by binding to Th17-associated gene promoters: regulates expression of the transcription factor RORC itself and RORC target genes such as IL17 (IL17A or IL17B). Also involved in differentiation of follicular T-helper cells (TfH) by directing expression of BCL6 and MAF. In B-cells, involved in class-switch recombination (CSR) by controlling the expression of both AICDA and of germline transcripts of the intervening heavy-chain region and constant heavy-chain region (I(H)-C(H)). Following infection, can participate in CD8(+) dendritic cell differentiation via interaction with IRF4 and IRF8 to mediate cooperative gene activation. Regulates effector CD8(+) T-cell differentiation by regulating expression of SIRT1. Following DNA damage, part of a differentiation checkpoint that limits self-renewal of hematopoietic stem cells (HSCs): up-regulated by STAT3, leading to differentiation of HSCs, thereby restricting self-renewal of HSCs. The sequence is that of Basic leucine zipper transcriptional factor ATF-like (BATF) from Bos taurus (Bovine).